Consider the following 317-residue polypeptide: Tyrosine--tRNA ligase (317 aa).

Y33 contributes to the L-tyrosine binding site. The short motif at 38–46 (PSGKIHMGH) is the 'HIGH' region element. Residues Y155, Q159, D162, and Q177 each coordinate L-tyrosine. The short motif at 211–215 (KMASS) is the 'KMSKS' region element. Residue S214 participates in ATP binding.

This sequence belongs to the class-I aminoacyl-tRNA synthetase family. TyrS type 3 subfamily. In terms of assembly, homodimer.

It is found in the cytoplasm. The enzyme catalyses tRNA(Tyr) + L-tyrosine + ATP = L-tyrosyl-tRNA(Tyr) + AMP + diphosphate + H(+). Functionally, catalyzes the attachment of tyrosine to tRNA(Tyr) in a two-step reaction: tyrosine is first activated by ATP to form Tyr-AMP and then transferred to the acceptor end of tRNA(Tyr). This Methanosarcina acetivorans (strain ATCC 35395 / DSM 2834 / JCM 12185 / C2A) protein is Tyrosine--tRNA ligase.